The sequence spans 753 residues: Protein-lysine N-methyltransferase SMYD4 (753 aa).

Residue 112–114 (RSA) coordinates S-adenosyl-L-methionine. Residues 186–528 (DGVSVYFSSD…AGQEILHCYG (343 aa)) form the SET domain. Zn(2+)-binding residues include Cys246, Cys249, Cys259, Cys262, Cys268, Cys272, His281, and Cys285. The MYND-type zinc-finger motif lies at 246 to 285 (CHHCLSQSLSFVPCPKCSYARYCGESCQKDAWDQWHQWEC). Residues 467–468 (NH) and Tyr527 contribute to the S-adenosyl-L-methionine site.

The protein belongs to the class V-like SAM-binding methyltransferase superfamily.

Its subcellular location is the nucleus. The protein resides in the cytoplasm. It carries out the reaction L-lysyl-[protein] + S-adenosyl-L-methionine = N(6)-methyl-L-lysyl-[protein] + S-adenosyl-L-homocysteine + H(+). In terms of biological role, protein-lysine N-methyltransferase. Monomethylates PRMT5, modulating its transcriptional activity. May also act as a histone methyltransferase. Plays a critical role in cardiac development. Acts as a key epigenetic regulator of gene expression during cardiac development via its dual activities as a methyltransferase and negative regulator of HDAC1. This chain is Protein-lysine N-methyltransferase SMYD4 (smyd4), found in Danio rerio (Zebrafish).